Reading from the N-terminus, the 309-residue chain is MENCTEVTKFILLGLTSVPELQIPLFILFTFIYLLTLCGNLGMMLLILMDSCLHTPMYFFLSNLSLVDFGYSSAVTPKVMAGFLRGDKVISYNACAVQMFFFVALATVENYLLASMAYDRYAAVCKPLHYTTTMTASVGACLALGSYVCGFLNASFHIGGIFSLSFCKSNLVHHFFCDVPAVMALSCSDKHTSEVILVFMSSFNIFFVLLVIFISYLFIFITILKMHSAKGHQKALSTCASHFTAVSVFYGTVIFIYLQPSSSHSMDTDKMASVFYAMIIPMLNPVVYSLRNREVQNAFKKVLRRQKFL.

At 1 to 23 (MENCTEVTKFILLGLTSVPELQI) the chain is on the extracellular side. Asparagine 3 is a glycosylation site (N-linked (GlcNAc...) asparagine). The helical transmembrane segment at 24–47 (PLFILFTFIYLLTLCGNLGMMLLI) threads the bilayer. Topologically, residues 48 to 55 (LMDSCLHT) are cytoplasmic. A helical transmembrane segment spans residues 56-77 (PMYFFLSNLSLVDFGYSSAVTP). Over 78–98 (KVMAGFLRGDKVISYNACAVQ) the chain is Extracellular. Cysteine 95 and cysteine 187 are disulfide-bonded. The helical transmembrane segment at 99 to 118 (MFFFVALATVENYLLASMAY) threads the bilayer. The Cytoplasmic segment spans residues 119–137 (DRYAAVCKPLHYTTTMTAS). Residues 138–156 (VGACLALGSYVCGFLNASF) form a helical membrane-spanning segment. Over 157–193 (HIGGIFSLSFCKSNLVHHFFCDVPAVMALSCSDKHTS) the chain is Extracellular. Residues 194-217 (EVILVFMSSFNIFFVLLVIFISYL) form a helical membrane-spanning segment. Residues 218 to 234 (FIFITILKMHSAKGHQK) are Cytoplasmic-facing. The chain crosses the membrane as a helical span at residues 235 to 257 (ALSTCASHFTAVSVFYGTVIFIY). The Extracellular segment spans residues 258–270 (LQPSSSHSMDTDK). A helical membrane pass occupies residues 271–290 (MASVFYAMIIPMLNPVVYSL). Residues 291-309 (RNREVQNAFKKVLRRQKFL) are Cytoplasmic-facing.

This sequence belongs to the G-protein coupled receptor 1 family.

The protein resides in the cell membrane. Its function is as follows. Odorant receptor. The protein is Olfactory receptor 5B2 (OR5B2) of Homo sapiens (Human).